A 113-amino-acid chain; its full sequence is Hydrogenase maturation factor HypA (113 aa).

H2 contacts Ni(2+). Zn(2+) is bound by residues C73, C76, C89, and C92.

This sequence belongs to the HypA/HybF family.

Functionally, involved in the maturation of [NiFe] hydrogenases. Required for nickel insertion into the metal center of the hydrogenase. The sequence is that of Hydrogenase maturation factor HypA from Paracoccus denitrificans (strain Pd 1222).